The chain runs to 392 residues: Probable tRNA sulfurtransferase (392 aa).

Residues 59-167 (ADITDRVKKV…DQAFVFSNKI (109 aa)) form the THUMP domain. ATP contacts are provided by residues 184–185 (LL), 209–210 (HF), arginine 266, glycine 288, and glutamine 297.

The protein belongs to the ThiI family.

The protein localises to the cytoplasm. It catalyses the reaction [ThiI sulfur-carrier protein]-S-sulfanyl-L-cysteine + a uridine in tRNA + 2 reduced [2Fe-2S]-[ferredoxin] + ATP + H(+) = [ThiI sulfur-carrier protein]-L-cysteine + a 4-thiouridine in tRNA + 2 oxidized [2Fe-2S]-[ferredoxin] + AMP + diphosphate. The enzyme catalyses [ThiS sulfur-carrier protein]-C-terminal Gly-Gly-AMP + S-sulfanyl-L-cysteinyl-[cysteine desulfurase] + AH2 = [ThiS sulfur-carrier protein]-C-terminal-Gly-aminoethanethioate + L-cysteinyl-[cysteine desulfurase] + A + AMP + 2 H(+). Its pathway is cofactor biosynthesis; thiamine diphosphate biosynthesis. In terms of biological role, catalyzes the ATP-dependent transfer of a sulfur to tRNA to produce 4-thiouridine in position 8 of tRNAs, which functions as a near-UV photosensor. Also catalyzes the transfer of sulfur to the sulfur carrier protein ThiS, forming ThiS-thiocarboxylate. This is a step in the synthesis of thiazole, in the thiamine biosynthesis pathway. The sulfur is donated as persulfide by IscS. This chain is Probable tRNA sulfurtransferase, found in Alkaliphilus oremlandii (strain OhILAs) (Clostridium oremlandii (strain OhILAs)).